Reading from the N-terminus, the 157-residue chain is Ribosomal RNA large subunit methyltransferase H (157 aa).

S-adenosyl-L-methionine contacts are provided by residues Leu-73, Gly-105, and 124–129 (LSLMTF).

The protein belongs to the RNA methyltransferase RlmH family. Homodimer.

It localises to the cytoplasm. The enzyme catalyses pseudouridine(1915) in 23S rRNA + S-adenosyl-L-methionine = N(3)-methylpseudouridine(1915) in 23S rRNA + S-adenosyl-L-homocysteine + H(+). Functionally, specifically methylates the pseudouridine at position 1915 (m3Psi1915) in 23S rRNA. This is Ribosomal RNA large subunit methyltransferase H from Flavobacterium johnsoniae (strain ATCC 17061 / DSM 2064 / JCM 8514 / BCRC 14874 / CCUG 350202 / NBRC 14942 / NCIMB 11054 / UW101) (Cytophaga johnsonae).